A 267-amino-acid polypeptide reads, in one-letter code: Apolipoprotein A-I (267 aa).

Positions 1 to 18 (MKAAVLTLAVLFLTGSQA) are cleaved as a signal peptide. 2 tandem repeats follow at residues 68–89 (LKLL…EQLG) and 90–111 (PVTQ…QEMS). The 10 X approximate tandem repeats stretch occupies residues 68–267 (LKLLDNWDSV…EEYTKKLNTQ (200 aa)). At Met-110 the chain carries Methionine sulfoxide. One copy of the 3; half-length repeat lies at 112–122 (KDLEEVKAKVQ). 5 repeat units span residues 123–144 (PYLD…QKVE), 145–166 (PLRA…EKLS), 167–188 (PLGE…THLA), 189–210 (PYSD…ENGG), and 211–232 (ARLA…EKAK). Met-136 carries the post-translational modification Methionine sulfoxide. One copy of the 9; half-length repeat lies at 233–243 (PALEDLRQGLL). Repeat 10 spans residues 244-267 (PVLESFKVSFLSALEEYTKKLNTQ).

The protein belongs to the apolipoprotein A1/A4/E family. In terms of assembly, homodimer. Interacts with APOA1BP and CLU. Component of a sperm activating protein complex (SPAP), consisting of APOA1, an immunoglobulin heavy chain, an immunoglobulin light chain and albumin. Interacts with NDRG1. Interacts with SCGB3A2. Interacts with NAXE and YJEFN3. In terms of processing, glycosylated. Palmitoylated. Post-translationally, phosphorylation sites are present in the extracellular medium. Major protein of plasma HDL, also found in chylomicrons.

It localises to the secreted. Participates in the reverse transport of cholesterol from tissues to the liver for excretion by promoting cholesterol efflux from tissues and by acting as a cofactor for the lecithin cholesterol acyltransferase (LCAT). As part of the SPAP complex, activates spermatozoa motility. The protein is Apolipoprotein A-I (APOA1) of Pan paniscus (Pygmy chimpanzee).